A 96-amino-acid chain; its full sequence is Small ribosomal subunit protein bS6 (96 aa).

This sequence belongs to the bacterial ribosomal protein bS6 family.

In terms of biological role, binds together with bS18 to 16S ribosomal RNA. In Streptococcus gordonii (strain Challis / ATCC 35105 / BCRC 15272 / CH1 / DL1 / V288), this protein is Small ribosomal subunit protein bS6.